Here is a 740-residue protein sequence, read N- to C-terminus: Rho GTPase-activating protein 92B (740 aa).

Residues 13–246 (ENLSRSSKSD…IQDTIQGTEK (234 aa)) enclose the BAR domain. The disordered stretch occupies residues 49-74 (LPALSGGGGSGSGSSEEQDKRTKKNS). The Rho-GAP domain occupies 251 to 448 (TSLKEHLTST…LLISQWDYFF (198 aa)). Residues 467–740 (GKSKSNSSNE…PPPTNWKSSD (274 aa)) form a disordered region. Residues serine 469 and serine 473 each carry the phosphoserine modification. A compositionally biased stretch (polar residues) spans 506-520 (TTNGNGIIMTTSQTS). Positions 566 to 577 (PLPPPPVTPAKP) are enriched in pro residues. A Phosphoserine modification is found at serine 593. Residue threonine 595 is modified to Phosphothreonine. Residues 643 to 655 (TTPTQATIDNGNG) are compositionally biased toward polar residues. A compositionally biased stretch (basic and acidic residues) spans 659-672 (FKTEHFLDKLRQEN). Over residues 673–686 (GETNGTREVSSTTK) the composition is skewed to polar residues. A compositionally biased stretch (low complexity) spans 694 to 713 (PPATAADQNQQQAQPQVTTP). Phosphoserine is present on serine 715. The residue at position 721 (threonine 721) is a Phosphothreonine. Residues 725 to 734 (PTVPAPPPPT) are compositionally biased toward pro residues. Residues serine 738 and serine 739 each carry the phosphoserine modification.

GTPase activator for the Rho-type GTPases by converting them to an inactive GDP-bound state. This chain is Rho GTPase-activating protein 92B (RhoGAP92B), found in Drosophila melanogaster (Fruit fly).